The sequence spans 361 residues: uncharacterized protein (361 aa).

This is an uncharacterized protein from Acanthamoeba polyphaga (Amoeba).